The following is a 105-amino-acid chain: ATP-dependent Clp protease adapter protein ClpS (105 aa).

Belongs to the ClpS family. In terms of assembly, binds to the N-terminal domain of the chaperone ClpA.

Involved in the modulation of the specificity of the ClpAP-mediated ATP-dependent protein degradation. In Aeromonas hydrophila subsp. hydrophila (strain ATCC 7966 / DSM 30187 / BCRC 13018 / CCUG 14551 / JCM 1027 / KCTC 2358 / NCIMB 9240 / NCTC 8049), this protein is ATP-dependent Clp protease adapter protein ClpS.